The chain runs to 445 residues: MSDQASKPAPAVKKLFIKTYGCQMNVYDSQRMAEAMGAEGYVLTENQSDADMVLLNTCHIREKAAEKLYSDLGRLKPLKAERPDLKIGVAGCVAQAEGEEIQRRMPIVDLVVGPQAYHRLPAMARAGRGVDTEFPAEDKFEHLPKPAATRRAPAAFLTVQEGCDKFCAFCVVPYTRGAEVSRPVSRILAEARDLVARGVREITLLGQNVNGWHGEGPEGSEWGFGRLIRAIAEIDGLDRIRYTTSHPNDMADDLIAAHRDEPKLMPYLHLPVQSGSDRILKAMNRRHTVDQYLRLIERIREARPDIMLTSDFIVGFPGETDQDHQGTLELVRAVNFGTAFSFKYSPRPGTPAYERPEIEGAVADARLQELQALLTSQQKAAQEGMVGRELGVLFEKPGRNPGQMVGKSDYLHAVFVEAPAAKVGDLVRVRITHSAPNSLAGVLAA.

An MTTase N-terminal domain is found at 13 to 129; it reads KKLFIKTYGC…LPAMARAGRG (117 aa). The [4Fe-4S] cluster site is built by Cys22, Cys58, Cys92, Cys163, Cys167, and Cys170. Residues 149 to 383 enclose the Radical SAM core domain; sequence TRRAPAAFLT…LTSQQKAAQE (235 aa). The 63-residue stretch at 383-445 folds into the TRAM domain; the sequence is EGMVGRELGV…PNSLAGVLAA (63 aa).

Belongs to the methylthiotransferase family. MiaB subfamily. Monomer. The cofactor is [4Fe-4S] cluster.

It localises to the cytoplasm. It catalyses the reaction N(6)-dimethylallyladenosine(37) in tRNA + (sulfur carrier)-SH + AH2 + 2 S-adenosyl-L-methionine = 2-methylsulfanyl-N(6)-dimethylallyladenosine(37) in tRNA + (sulfur carrier)-H + 5'-deoxyadenosine + L-methionine + A + S-adenosyl-L-homocysteine + 2 H(+). Its function is as follows. Catalyzes the methylthiolation of N6-(dimethylallyl)adenosine (i(6)A), leading to the formation of 2-methylthio-N6-(dimethylallyl)adenosine (ms(2)i(6)A) at position 37 in tRNAs that read codons beginning with uridine. This is tRNA-2-methylthio-N(6)-dimethylallyladenosine synthase from Paracoccus denitrificans (strain Pd 1222).